A 272-amino-acid chain; its full sequence is Shikimate dehydrogenase (NADP(+)) (272 aa).

Residues 14 to 16 and T61 each bind shikimate; that span reads SKS. K65 acts as the Proton acceptor in catalysis. E77 contributes to the NADP(+) binding site. 2 residues coordinate shikimate: N86 and D102. NADP(+)-binding positions include 126–130, 149–154, and M213; these read GAGGA and NRTVSR. Y215 contacts shikimate. NADP(+) is bound at residue G237.

Belongs to the shikimate dehydrogenase family. Homodimer.

The catalysed reaction is shikimate + NADP(+) = 3-dehydroshikimate + NADPH + H(+). It participates in metabolic intermediate biosynthesis; chorismate biosynthesis; chorismate from D-erythrose 4-phosphate and phosphoenolpyruvate: step 4/7. Involved in the biosynthesis of the chorismate, which leads to the biosynthesis of aromatic amino acids. Catalyzes the reversible NADPH linked reduction of 3-dehydroshikimate (DHSA) to yield shikimate (SA). The protein is Shikimate dehydrogenase (NADP(+)) of Shigella dysenteriae serotype 1 (strain Sd197).